We begin with the raw amino-acid sequence, 496 residues long: Glycerol kinase (496 aa).

Thr12 contributes to the ADP binding site. 3 residues coordinate ATP: Thr12, Thr13, and Ser14. Residue Thr12 coordinates sn-glycerol 3-phosphate. An ADP-binding site is contributed by Arg16. Sn-glycerol 3-phosphate contacts are provided by Arg82, Glu83, Tyr134, and Asp244. Glycerol contacts are provided by Arg82, Glu83, Tyr134, Asp244, and Gln245. Residues Thr266 and Gly309 each coordinate ADP. 4 residues coordinate ATP: Thr266, Gly309, Gln313, and Gly410. ADP contacts are provided by Gly410 and Asn414.

This sequence belongs to the FGGY kinase family.

It catalyses the reaction glycerol + ATP = sn-glycerol 3-phosphate + ADP + H(+). The protein operates within polyol metabolism; glycerol degradation via glycerol kinase pathway; sn-glycerol 3-phosphate from glycerol: step 1/1. Its activity is regulated as follows. Inhibited by fructose 1,6-bisphosphate (FBP). Its function is as follows. Key enzyme in the regulation of glycerol uptake and metabolism. Catalyzes the phosphorylation of glycerol to yield sn-glycerol 3-phosphate. This is Glycerol kinase from Treponema denticola (strain ATCC 35405 / DSM 14222 / CIP 103919 / JCM 8153 / KCTC 15104).